A 467-amino-acid chain; its full sequence is MTSELWHQCLGYLEDELPAQQFNTWLRPLQAKGSEEELLLFAPNRFVLDWVNEKYIGRINEILSELTSQKAPRISLKIGSITGNSKGQQASKDSAVGATRTTAPSRPVIADVAPSGERNVTVEGAIKHESYLNPTFTFETFVEGKSNQLARAAAMQVADNPGSAYNPLFLYGGVGLGKTHLMQAVGNAIFKKNPNAKILYLHSERFVADMVKALQLNAFNEFKRLYRSVDALLIDDIQFFARKERSQEEFFHTFNALLEGGQQMILTCDRYPKEIDHMEERLKSRFGWGLTVMVEPPELETRVAILMKKAEQANVHLSSESAFFIAQKIRSNVRELEGALKLVIANAHFTGQEITPAFIRECLKDLLALHEKQVSIDNIQRTVAEYYKIRIADILSKRRTRSITRPRQMAMALAKELTNHSLPEIGEAFGGRDHTTVLHACKVMIELQQSDPTLRDDYQNFMRMLTS.

The interval 1–80 (MTSELWHQCL…APRISLKIGS (80 aa)) is domain I, interacts with DnaA modulators. Positions 80–130 (SITGNSKGQQASKDSAVGATRTTAPSRPVIADVAPSGERNVTVEGAIKHES) are domain II. The segment at 131–347 (YLNPTFTFET…GALKLVIANA (217 aa)) is domain III, AAA+ region. ATP is bound by residues Gly-175, Gly-177, Lys-178, and Thr-179. Residues 348–467 (HFTGQEITPA…YQNFMRMLTS (120 aa)) form a domain IV, binds dsDNA region.

This sequence belongs to the DnaA family. In terms of assembly, oligomerizes as a right-handed, spiral filament on DNA at oriC.

The protein localises to the cytoplasm. Its function is as follows. Plays an essential role in the initiation and regulation of chromosomal replication. ATP-DnaA binds to the origin of replication (oriC) to initiate formation of the DNA replication initiation complex once per cell cycle. Binds the DnaA box (a 9 base pair repeat at the origin) and separates the double-stranded (ds)DNA. Forms a right-handed helical filament on oriC DNA; dsDNA binds to the exterior of the filament while single-stranded (ss)DNA is stabiized in the filament's interior. The ATP-DnaA-oriC complex binds and stabilizes one strand of the AT-rich DNA unwinding element (DUE), permitting loading of DNA polymerase. After initiation quickly degrades to an ADP-DnaA complex that is not apt for DNA replication. Binds acidic phospholipids. The sequence is that of Chromosomal replication initiator protein DnaA from Hahella chejuensis (strain KCTC 2396).